Consider the following 261-residue polypeptide: Indole-3-glycerol phosphate synthase (261 aa).

It belongs to the TrpC family.

The catalysed reaction is 1-(2-carboxyphenylamino)-1-deoxy-D-ribulose 5-phosphate + H(+) = (1S,2R)-1-C-(indol-3-yl)glycerol 3-phosphate + CO2 + H2O. The protein operates within amino-acid biosynthesis; L-tryptophan biosynthesis; L-tryptophan from chorismate: step 4/5. The sequence is that of Indole-3-glycerol phosphate synthase from Burkholderia vietnamiensis (strain G4 / LMG 22486) (Burkholderia cepacia (strain R1808)).